The primary structure comprises 265 residues: MEMO1 family protein Mbar_A1422 (265 aa).

It belongs to the MEMO1 family.

The polypeptide is MEMO1 family protein Mbar_A1422 (Methanosarcina barkeri (strain Fusaro / DSM 804)).